A 187-amino-acid polypeptide reads, in one-letter code: Hypoxanthine/guanine phosphoribosyltransferase (187 aa).

This sequence belongs to the purine/pyrimidine phosphoribosyltransferase family. Archaeal HPRT subfamily. In terms of assembly, homodimer.

It is found in the cytoplasm. The enzyme catalyses IMP + diphosphate = hypoxanthine + 5-phospho-alpha-D-ribose 1-diphosphate. The catalysed reaction is GMP + diphosphate = guanine + 5-phospho-alpha-D-ribose 1-diphosphate. Its pathway is purine metabolism; IMP biosynthesis via salvage pathway; IMP from hypoxanthine: step 1/1. Its function is as follows. Catalyzes a salvage reaction resulting in the formation of IMP that is energically less costly than de novo synthesis. This Methanocorpusculum labreanum (strain ATCC 43576 / DSM 4855 / Z) protein is Hypoxanthine/guanine phosphoribosyltransferase.